The sequence spans 512 residues: Gamma-aminobutyric acid receptor subunit beta-2 (512 aa).

A signal peptide spans 1–25 (MWRVRKRGYFGIWSFPLIIAAVCAQ). Residues 26 to 244 (SVNDPSNMSL…SFKLKRNIGY (219 aa)) are Extracellular-facing. 2 N-linked (GlcNAc...) asparagine glycosylation sites follow: Asn32 and Asn104. Tyr121 is a binding site for histamine. A disulfide bridge links Cys160 with Cys174. Asn173 carries an N-linked (GlcNAc...) asparagine glycan. Histamine-binding positions include 180–181 (SY) and Thr226. Residues Tyr181 and Thr226 each contribute to the 4-aminobutanoate site. Helical transmembrane passes span 245–266 (FILQTYMPSILITILSWVSFWI), 270–292 (ASAARVALGITTVLTMTTINTHL), and 304–326 (AIDMYLMGCFVFVFMALLEYALV). The Cytoplasmic segment spans residues 327-489 (NYIFFGRGPQ…DLTDVNAIDR (163 aa)). Tyr441 is subject to Phosphotyrosine. A helical transmembrane segment spans residues 490–511 (WSRIFFPVVFSFFNIVYWLYYV).

The protein belongs to the ligand-gated ion channel (TC 1.A.9) family. Gamma-aminobutyric acid receptor (TC 1.A.9.5) subfamily. GABRB2 sub-subfamily. As to quaternary structure, heteropentamer, formed by a combination of alpha (GABRA1-6), beta (GABRB1-3), gamma (GABRG1-3), delta (GABRD), epsilon (GABRE), rho (GABRR1-3), pi (GABRP) and theta (GABRQ) chains, each subunit exhibiting distinct physiological and pharmacological properties. Interacts with UBQLN1. May interact with KIF21B. Identified in a complex of 720 kDa composed of LHFPL4, NLGN2, GABRA1, GABRB2, GABRG2 and GABRB3. Glycosylated.

The protein resides in the postsynaptic cell membrane. The protein localises to the cell membrane. It is found in the cytoplasmic vesicle. It catalyses the reaction chloride(in) = chloride(out). Allosterically activated by benzodiazepines and the anesthetic etomidate. Inhibited by the antagonist bicuculline. Potentiated by histamine. Its function is as follows. Beta subunit of the heteropentameric ligand-gated chloride channel gated by gamma-aminobutyric acid (GABA), a major inhibitory neurotransmitter in the brain. GABA-gated chloride channels, also named GABA(A) receptors (GABAAR), consist of five subunits arranged around a central pore and contain GABA active binding site(s) located at the alpha and beta subunit interface(s). When activated by GABA, GABAARs selectively allow the flow of chloride anions across the cell membrane down their electrochemical gradient. Chloride influx into the postsynaptic neuron following GABAAR opening decreases the neuron ability to generate a new action potential, thereby reducing nerve transmission. GABAARs containing alpha-1 and beta-2 or -3 subunits exhibit synaptogenic activity; the gamma-2 subunit being necessary but not sufficient to induce rapid synaptic contacts formation. Extrasynaptic beta-2 receptors contribute to the tonic GABAergic inhibition. Beta-containing GABAARs can simultaneously bind GABA and histamine where histamine binds at the interface of two neighboring beta subunits, which may be involved in the regulation of sleep and wakefulness. This is Gamma-aminobutyric acid receptor subunit beta-2 from Mus musculus (Mouse).